Reading from the N-terminus, the 269-residue chain is Exodeoxyribonuclease WalJ (269 aa).

Residues His61, His63, Asp65, His66, and Asp150 each contribute to the a divalent metal cation site.

The protein belongs to the metallo-beta-lactamase superfamily. Fe(2+) is required as a cofactor. It depends on Zn(2+) as a cofactor. Requires Mn(2+) as cofactor.

Its subcellular location is the cell membrane. Functionally, 5'-&gt;3' double-stranded DNA exonuclease. May be involved in the WalK/WalR signal transduction pathway. Required for accurate coordination of cell division with DNA replication. May play a role in cell wall metabolism. The sequence is that of Exodeoxyribonuclease WalJ from Streptococcus pneumoniae serotype 2 (strain D39 / NCTC 7466).